The chain runs to 171 residues: Peptide deformylase (171 aa).

Residues Cys-91 and His-133 each coordinate Fe cation. Glu-134 is a catalytic residue. Position 137 (His-137) interacts with Fe cation.

Belongs to the polypeptide deformylase family. Fe(2+) serves as cofactor.

It catalyses the reaction N-terminal N-formyl-L-methionyl-[peptide] + H2O = N-terminal L-methionyl-[peptide] + formate. In terms of biological role, removes the formyl group from the N-terminal Met of newly synthesized proteins. Requires at least a dipeptide for an efficient rate of reaction. N-terminal L-methionine is a prerequisite for activity but the enzyme has broad specificity at other positions. The protein is Peptide deformylase of Mannheimia succiniciproducens (strain KCTC 0769BP / MBEL55E).